A 226-amino-acid polypeptide reads, in one-letter code: MTNTEKRAVILLSGGLDSATVVAMARAEGYACYTMSFDYGQRHRAELDAAARVARDLGAVEHKVIGLNLSGIGGSALTDSSIAVPESPSEGIPVTYVPARNTVFLSLALGWAEVLGARDIFIGVNAVDYSGYPDCRPEFVESFERMANLATKAGVEGQGFTIRAPLQNLSKSDIVKAGIALGVDYALTVSCYQADDQGRACGKCDSCRLRAEGFTASGMSDPTRYF.

12-22 is an ATP binding site; that stretch reads LSGGLDSATVV. Zn(2+) contacts are provided by Cys191, Cys201, Cys204, and Cys207.

This sequence belongs to the QueC family. Requires Zn(2+) as cofactor.

The enzyme catalyses 7-carboxy-7-deazaguanine + NH4(+) + ATP = 7-cyano-7-deazaguanine + ADP + phosphate + H2O + H(+). It participates in purine metabolism; 7-cyano-7-deazaguanine biosynthesis. Functionally, catalyzes the ATP-dependent conversion of 7-carboxy-7-deazaguanine (CDG) to 7-cyano-7-deazaguanine (preQ(0)). The protein is 7-cyano-7-deazaguanine synthase of Pseudomonas syringae pv. tomato (strain ATCC BAA-871 / DC3000).